The following is a 259-amino-acid chain: 4-hydroxy-tetrahydrodipicolinate reductase (259 aa).

Residues Gly-9 to Met-14 and Glu-35 each bind NAD(+). NADP(+) is bound at residue Arg-36. NAD(+)-binding positions include Gly-92–Thr-94 and Ala-116–Met-119. The Proton donor/acceptor role is filled by His-149. His-150 lines the (S)-2,3,4,5-tetrahydrodipicolinate pocket. Lys-153 (proton donor) is an active-site residue. Gly-159–Thr-160 lines the (S)-2,3,4,5-tetrahydrodipicolinate pocket.

Belongs to the DapB family.

The protein localises to the cytoplasm. It carries out the reaction (S)-2,3,4,5-tetrahydrodipicolinate + NAD(+) + H2O = (2S,4S)-4-hydroxy-2,3,4,5-tetrahydrodipicolinate + NADH + H(+). The enzyme catalyses (S)-2,3,4,5-tetrahydrodipicolinate + NADP(+) + H2O = (2S,4S)-4-hydroxy-2,3,4,5-tetrahydrodipicolinate + NADPH + H(+). The protein operates within amino-acid biosynthesis; L-lysine biosynthesis via DAP pathway; (S)-tetrahydrodipicolinate from L-aspartate: step 4/4. Catalyzes the conversion of 4-hydroxy-tetrahydrodipicolinate (HTPA) to tetrahydrodipicolinate. This is 4-hydroxy-tetrahydrodipicolinate reductase from Nitratidesulfovibrio vulgaris (strain DP4) (Desulfovibrio vulgaris).